A 483-amino-acid chain; its full sequence is Glutamate--tRNA ligase (483 aa).

The 'HIGH' region motif lies at Pro-11–Asn-21. The 'KMSKS' region signature appears at Lys-255–Arg-259. Lys-258 serves as a coordination point for ATP.

The protein belongs to the class-I aminoacyl-tRNA synthetase family. Glutamate--tRNA ligase type 1 subfamily. As to quaternary structure, monomer.

It is found in the cytoplasm. The enzyme catalyses tRNA(Glu) + L-glutamate + ATP = L-glutamyl-tRNA(Glu) + AMP + diphosphate. Catalyzes the attachment of glutamate to tRNA(Glu) in a two-step reaction: glutamate is first activated by ATP to form Glu-AMP and then transferred to the acceptor end of tRNA(Glu). The sequence is that of Glutamate--tRNA ligase from Lactococcus lactis subsp. lactis (strain IL1403) (Streptococcus lactis).